We begin with the raw amino-acid sequence, 369 residues long: Molybdenum import ATP-binding protein ModC (369 aa).

The 237-residue stretch at 7-243 (PGQAGIHARF…LDLPMAMTDD (237 aa)) folds into the ABC transporter domain. Residue 41–48 (GQSGSGKT) coordinates ATP. Residues 304-369 (EGSILNVLAV…AQIKAVSLLA (66 aa)) enclose the Mop domain.

This sequence belongs to the ABC transporter superfamily. Molybdate importer (TC 3.A.1.8) family. In terms of assembly, the complex is composed of two ATP-binding proteins (ModC), two transmembrane proteins (ModB) and a solute-binding protein (ModA).

It is found in the cell inner membrane. The catalysed reaction is molybdate(out) + ATP + H2O = molybdate(in) + ADP + phosphate + H(+). Part of the ABC transporter complex ModABC involved in molybdenum import. Responsible for energy coupling to the transport system. The sequence is that of Molybdenum import ATP-binding protein ModC from Bordetella pertussis (strain Tohama I / ATCC BAA-589 / NCTC 13251).